The chain runs to 188 residues: Peroxidase B (188 aa).

It belongs to the peroxidase family. Post-translationally, partially N-glycosylated.

It is found in the secreted. It catalyses the reaction 2 a phenolic donor + H2O2 = 2 a phenolic radical donor + 2 H2O. The protein is Peroxidase B of Aloe vera (Aloe).